An 872-amino-acid chain; its full sequence is Leucine--tRNA ligase (872 aa).

Positions 42–52 (PYPSGSLHMGH) match the 'HIGH' region motif. Residues 634 to 638 (TMSKS) carry the 'KMSKS' region motif. An ATP-binding site is contributed by K637.

This sequence belongs to the class-I aminoacyl-tRNA synthetase family.

It localises to the cytoplasm. It carries out the reaction tRNA(Leu) + L-leucine + ATP = L-leucyl-tRNA(Leu) + AMP + diphosphate. In Trichormus variabilis (strain ATCC 29413 / PCC 7937) (Anabaena variabilis), this protein is Leucine--tRNA ligase.